Consider the following 216-residue polypeptide: Pathogenicity-related ORF2 (216 aa).

4 consecutive transmembrane segments (helical) span residues 6 to 26, 55 to 75, 157 to 177, and 193 to 213; these read VGSL…AAMV, LNGV…MEAF, IGFL…NALM, and FKLL…GLVL.

It belongs to the FliP/MopC/SpaP family.

The protein resides in the cell membrane. Its function is as follows. Important for pathogenicity. This chain is Pathogenicity-related ORF2, found in Xanthomonas campestris pv. glycines.